Reading from the N-terminus, the 293-residue chain is MAWVQIRLNSTDKQAEQISDFLEEIGAVSVTFMDSQDTPIFEPLPGETRLWGNTDVVGLFDAETDMKAIVEALIASRLVEADFVHKIEQIEDKDWEREWMDNFHPMQFGKRLWICPSWREVPDPNAVNVMLDPGLAFGTGTHPTTALCLQWLDSLDLTGKTVIDFGCGSGILAIAALKLGAKQAIGIDIDPQAILASGNNAEANGVADRLQLFLAKDQPQDLQADVVVANILAGPLKELAPNIITLVKPQGDLGLSGILATQAESVCEAYAPDFNLDPVVEKEEWCRITGVKK.

S-adenosyl-L-methionine contacts are provided by threonine 145, glycine 166, aspartate 188, and asparagine 230.

It belongs to the methyltransferase superfamily. PrmA family.

Its subcellular location is the cytoplasm. The catalysed reaction is L-lysyl-[protein] + 3 S-adenosyl-L-methionine = N(6),N(6),N(6)-trimethyl-L-lysyl-[protein] + 3 S-adenosyl-L-homocysteine + 3 H(+). Its function is as follows. Methylates ribosomal protein L11. This chain is Ribosomal protein L11 methyltransferase, found in Actinobacillus pleuropneumoniae serotype 7 (strain AP76).